The primary structure comprises 122 residues: NADH-quinone oxidoreductase subunit A (122 aa).

A run of 3 helical transmembrane segments spans residues 10-30, 66-86, and 91-111; these read MIVL…LTLG, IFAL…PWAV, and LGLF…VGLA.

It belongs to the complex I subunit 3 family. In terms of assembly, NDH-1 is composed of 14 different subunits. Subunits NuoA, H, J, K, L, M, N constitute the membrane sector of the complex.

The protein localises to the cell membrane. It catalyses the reaction a quinone + NADH + 5 H(+)(in) = a quinol + NAD(+) + 4 H(+)(out). Its function is as follows. NDH-1 shuttles electrons from NADH, via FMN and iron-sulfur (Fe-S) centers, to quinones in the respiratory chain. The immediate electron acceptor for the enzyme in this species is believed to be a menaquinone. Couples the redox reaction to proton translocation (for every two electrons transferred, four hydrogen ions are translocated across the cytoplasmic membrane), and thus conserves the redox energy in a proton gradient. This chain is NADH-quinone oxidoreductase subunit A, found in Bacillus cereus (strain ATCC 14579 / DSM 31 / CCUG 7414 / JCM 2152 / NBRC 15305 / NCIMB 9373 / NCTC 2599 / NRRL B-3711).